The chain runs to 486 residues: MTTFYTVVSWLVILGYWVLIAGVTLRILMKRRAVPSAMAWLLIIYILPLVGIIAYLSVGELHLGKRRAERARAMWPSTAKWLNDLKACKHIFAQENSSVASSLFKLCERRQGIAGVKGNQLQLLTDSDDVMQALIRDIQLARHNIEMVFYIWQPGGMADQVAESLMAAARRGIHCRLMLDSAGSVAFFRSPWAAMMRNAGIEVVEALKVNLMRVFLRRMDLRQHRKMVMIDNYIAYTGSMNMVDPRFFKQDAGVGQWVDLMARMEGPVATAMGIVYSCDWEIETGKRILPPSPDVNIMPFEQASGHTIHTIASGPGFPEDLIHQALLTATYAAREYLIMTTPYFVPSDDLLHAICTAAQRGVDVSIILPRKNDSLLVGWASRAFFSELLAAGVKIYQFEGGLLHTKSVLVDGELSLVGTVNLDMRSLWLNFEITLVIDDTGFGADLAAVQDDYISRSRLLDARLWVKRPLWQRITERLFYFFSPLL.

The next 2 membrane-spanning stretches (helical) occupy residues 3–23 (TFYTVVSWLVILGYWVLIAGV) and 38–58 (MAWLLIIYILPLVGIIAYLSV). 2 PLD phosphodiesterase domains span residues 219 to 246 (MDLRQHRKMVMIDNYIAYTGSMNMVDPR) and 399 to 426 (EGGLLHTKSVLVDGELSLVGTVNLDMRS). Active-site residues include histidine 224, lysine 226, aspartate 231, histidine 404, lysine 406, and aspartate 411.

Belongs to the phospholipase D family. Cardiolipin synthase subfamily. ClsA sub-subfamily.

It is found in the cell inner membrane. The catalysed reaction is 2 a 1,2-diacyl-sn-glycero-3-phospho-(1'-sn-glycerol) = a cardiolipin + glycerol. In terms of biological role, catalyzes the reversible phosphatidyl group transfer from one phosphatidylglycerol molecule to another to form cardiolipin (CL) (diphosphatidylglycerol) and glycerol. This chain is Cardiolipin synthase A, found in Salmonella arizonae (strain ATCC BAA-731 / CDC346-86 / RSK2980).